Consider the following 607-residue polypeptide: Elongation factor 4 (607 aa).

Positions 11–193 constitute a tr-type G domain; it reads EKIRNFSIIA…QIVEKVPAPT (183 aa). GTP-binding positions include 23–28 and 140–143; these read DHGKST and NKID.

It belongs to the TRAFAC class translation factor GTPase superfamily. Classic translation factor GTPase family. LepA subfamily.

It is found in the cell membrane. The catalysed reaction is GTP + H2O = GDP + phosphate + H(+). Functionally, required for accurate and efficient protein synthesis under certain stress conditions. May act as a fidelity factor of the translation reaction, by catalyzing a one-codon backward translocation of tRNAs on improperly translocated ribosomes. Back-translocation proceeds from a post-translocation (POST) complex to a pre-translocation (PRE) complex, thus giving elongation factor G a second chance to translocate the tRNAs correctly. Binds to ribosomes in a GTP-dependent manner. This chain is Elongation factor 4, found in Streptococcus gordonii (strain Challis / ATCC 35105 / BCRC 15272 / CH1 / DL1 / V288).